Reading from the N-terminus, the 92-residue chain is Small ribosomal subunit protein uS19 (92 aa).

Belongs to the universal ribosomal protein uS19 family.

In terms of biological role, protein S19 forms a complex with S13 that binds strongly to the 16S ribosomal RNA. This Gloeothece citriformis (strain PCC 7424) (Cyanothece sp. (strain PCC 7424)) protein is Small ribosomal subunit protein uS19.